A 747-amino-acid polypeptide reads, in one-letter code: MRRSLAPSQLAKRKPEGRSCDDEDWQPGLVTPRKRKSSSETQIQECFLSPFRKPLSQLTNQPPCLDSSQHEAFIRSILSKPFKVPIPNYQGPLGSRALGLKRAGVRRALHDPLEKDALVLYEPPPLSAHDQLKLDKEKLPVHVVVDPILSKVLRPHQREGVKFLWECVTSRRIPGSHGCIMADEMGLGKTLQCITLMWTLLRQSPECKPEIDKAVVVSPSSLVKNWYNEVGKWLGGRIQPLAIDGGSKDEIDQKLEGFMNQRGARVSSPILIISYETFRLHVGVLQKGSVGLVICDEGHRLKNSENQTYQALDSLNTSRRVLISGTPIQNDLLEYFSLVHFVNSGILGTAHEFKKHFELPILKGRDAAASEADRQLGEERLRELTSIVNRCLIRRTSDILSKYLPVKIEQVVCCRLTPLQTELYKRFLRQAKPAEELLEGKMSVSSLSSITSLKKLCNHPALIYDKCVEEEDGFVGALDLFPPGYSSKALEPQLSGKMLVLDYILAVTRSRSSDKVVLVSNYTQTLDLFEKLCRARRYLYVRLDGTMSIKKRAKVVERFNSPSSPDFVFMLSSKAGGCGLNLIGANRLVMFDPDWNPANDEQAMARVWRDGQKKTCYIYRLLSAGTIEEKIFQRQSHKKALSSCVVDEEQDVERHFSLGELKELFILDEASLSDTHDRLHCRRCVNSRQIRPPPDGSDCTSDLAGWNHCTDKWGLRDEVLQAAWDAASTAITFVFHQRSHEEQRGLR.

Residues 1–41 are disordered; sequence MRRSLAPSQLAKRKPEGRSCDDEDWQPGLVTPRKRKSSSET. Positions 2–9 are required for chromatin remodeling, strand pairing activities and coupling of ATPase activity; it reads RRSLAPSQ. Ser-38 is modified (phosphoserine). One can recognise a Helicase ATP-binding domain in the interval 170-345; the sequence is SRRIPGSHGC…FSLVHFVNSG (176 aa). 183-190 contacts ATP; that stretch reads DEMGLGKT. Residues 296–299 carry the DEGH box motif; sequence DEGH. The Helicase C-terminal domain maps to 500–653; that stretch reads VLDYILAVTR…CVVDEEQDVE (154 aa). Lys-515 carries the N6-acetyllysine modification. At Ser-572 the chain carries Phosphoserine; by NEK1.

It belongs to the SNF2/RAD54 helicase family. Homohexamer. Interacts (via N-terminus) with RAD51. Interacts with NAP1L1. Interacts with BRD9; this interaction orchestrates RAD51-RAD54 complex formation. Post-translationally, acetylated. Acetylation promotes interaction with BRD9, and subsequently with RAD54, which is essential for homologous recombination (HR). Phosphorylated. Phosphorylation at Ser-572 by NEK1 specifically in G2 phase allows efficient removal of RAD51 filaments from DNA.

The protein localises to the nucleus. The enzyme catalyses ATP + H2O = ADP + phosphate + H(+). In terms of biological role, plays an essential role in homologous recombination (HR) which is a major pathway for repairing DNA double-strand breaks (DSBs), single-stranded DNA (ssDNA) gaps, and stalled or collapsed replication forks. Acts as a molecular motor during the homology search and guides RAD51 ssDNA along a donor dsDNA thereby changing the homology search from the diffusion-based mechanism to a motor-guided mechanism. Also plays an essential role in RAD51-mediated synaptic complex formation which consists of three strands encased in a protein filament formed once homology is recognized. Once DNA strand exchange occured, dissociates RAD51 from nucleoprotein filaments formed on dsDNA. This is DNA repair and recombination protein RAD54-like (RAD54L) from Homo sapiens (Human).